Here is a 515-residue protein sequence, read N- to C-terminus: Phenylalanine--tRNA ligase beta subunit (515 aa).

The B5 domain occupies 263–334 (HEYVKIYVDE…IVMGYNQMPR (72 aa)). 4 residues coordinate Mg(2+): Asn312, Asp318, Glu321, and Asp322.

Belongs to the phenylalanyl-tRNA synthetase beta subunit family. Type 2 subfamily. Tetramer of two alpha and two beta subunits. Mg(2+) serves as cofactor.

It is found in the cytoplasm. It catalyses the reaction tRNA(Phe) + L-phenylalanine + ATP = L-phenylalanyl-tRNA(Phe) + AMP + diphosphate + H(+). The chain is Phenylalanine--tRNA ligase beta subunit from Pyrobaculum aerophilum (strain ATCC 51768 / DSM 7523 / JCM 9630 / CIP 104966 / NBRC 100827 / IM2).